The primary structure comprises 522 residues: Cytochrome P450 monooxygenase sirB (522 aa).

A helical transmembrane segment spans residues 22 to 42; the sequence is ASAILFCTLLTVFLFISQGTV. The N-linked (GlcNAc...) asparagine glycan is linked to N191. Residues 304–324 traverse the membrane as a helical segment; it reads VLHLSFAATGTVAILITHMIY. A heme-binding site is contributed by C462.

It belongs to the cytochrome P450 family. Heme is required as a cofactor.

The protein resides in the membrane. It participates in mycotoxin biosynthesis. Cytochrome P450 monooxygenase; part of the gene cluster that mediates the biosynthesis of sirodesmin PL, an epipolythiodioxopiperazine (ETP) characterized by a disulfide bridged cyclic dipeptide and that acts as a phytotoxin which is involved in the blackleg didease of canola. SirD catalyzes the O-prenylation of L-tyrosine (L-Tyr) in the presence of dimethylallyl diphosphate (DMAPP) to yield 4-O-dimethylallyl-L-Tyr, and therefore represents probably the first pathway-specific enzyme in the biosynthesis of sirodesmin PL. 4-O-dimethylallyl-L-Tyr, then undergoes condensation with L-Ser in a reaction catalyzed by the non-ribosomal peptide synthase sirP to form the diketopiperazine (DKP) backbone. Further bishydroxylation of the DKP performed by the cytochrome P450 monooxygenase sirC leads to the production of the intermediate phomamide. This step is essential to form the reactive thiol group required for toxicity of sirodesmin PL. The next steps of sirodesmin biosynthesis are not well understood yet, but some predictions could be made from intermediate compounds identification. Phomamide is converted into phomalizarine via oxidation, probably by sirT. Further oxidation, methylation (by sirM or sirN) and reduction steps convert phomalizarine to deacetyl sirodesmin. Finally, acetyltransferase sirH probably acetylates deacetyl sirodesmin to produce sirodesmin PL. The sequence is that of Cytochrome P450 monooxygenase sirB from Leptosphaeria maculans (Blackleg fungus).